We begin with the raw amino-acid sequence, 521 residues long: DEAD-box ATP-dependent RNA helicase 12 (521 aa).

A disordered region spans residues 1 to 97 (MHHPRARYPP…QQWLRRDQAT (97 aa)). Residues 13–50 (TSGGGGGGGGGGGGGRGNGGGGFGGGGGGGGGNHGYYG) show a composition bias toward gly residues. Over residues 51–89 (RGPQPQPQQQHYHHQAQQLHQHQQQQQHAQRNSSSQQQQ) the composition is skewed to low complexity. Positions 147-175 (NEFEDYFLKRELLMGIYEKGFERPSPIQE) match the Q motif motif. Residues 178–348 (IPIALTGSDI…EKYLPRPYVI (171 aa)) enclose the Helicase ATP-binding domain. 191–198 (AKNGTGKT) is an ATP binding site. Residues 296-299 (DEAD) carry the DEAD box motif. A Helicase C-terminal domain is found at 358 to 518 (GITQYYAFVE…TIPPQIDLAV (161 aa)).

Belongs to the DEAD box helicase family. DDX6/DHH1 subfamily.

The protein resides in the cytoplasm. It is found in the P-body. It catalyses the reaction ATP + H2O = ADP + phosphate + H(+). Functionally, ATP-dependent RNA helicase involved in mRNA turnover, and more specifically in mRNA decapping. The sequence is that of DEAD-box ATP-dependent RNA helicase 12 from Oryza sativa subsp. japonica (Rice).